The primary structure comprises 281 residues: Protease HtpX homolog (281 aa).

2 consecutive transmembrane segments (helical) span residues Val-6–Gly-26 and Ser-28–Ser-48. His-130 contributes to the Zn(2+) binding site. Residue Glu-131 is part of the active site. A Zn(2+)-binding site is contributed by His-134. 2 helical membrane passes run Val-140–Val-160 and Ile-181–Ile-201. Glu-206 is a binding site for Zn(2+).

It belongs to the peptidase M48B family. Zn(2+) serves as cofactor.

Its subcellular location is the cell membrane. The polypeptide is Protease HtpX homolog (Pelotomaculum thermopropionicum (strain DSM 13744 / JCM 10971 / SI)).